A 205-amino-acid chain; its full sequence is Large ribosomal subunit protein uL4 (205 aa).

The segment at 44 to 79 is disordered; sequence RAGTKAQKTRREVSGSGAKPWRQKGTGRARAGSSRS.

The protein belongs to the universal ribosomal protein uL4 family. As to quaternary structure, part of the 50S ribosomal subunit.

In terms of biological role, one of the primary rRNA binding proteins, this protein initially binds near the 5'-end of the 23S rRNA. It is important during the early stages of 50S assembly. It makes multiple contacts with different domains of the 23S rRNA in the assembled 50S subunit and ribosome. Functionally, forms part of the polypeptide exit tunnel. The polypeptide is Large ribosomal subunit protein uL4 (Coxiella burnetii (strain Dugway 5J108-111)).